A 123-amino-acid chain; its full sequence is Large ribosomal subunit protein bL19c (123 aa).

The protein belongs to the bacterial ribosomal protein bL19 family.

The protein resides in the plastid. The protein localises to the chloroplast. This chain is Large ribosomal subunit protein bL19c (rpl19), found in Porphyra purpurea (Red seaweed).